A 140-amino-acid chain; its full sequence is Putative pre-16S rRNA nuclease (140 aa).

This sequence belongs to the YqgF nuclease family.

The protein localises to the cytoplasm. Functionally, could be a nuclease involved in processing of the 5'-end of pre-16S rRNA. This Pasteurella multocida (strain Pm70) protein is Putative pre-16S rRNA nuclease.